The sequence spans 154 residues: Endoribonuclease YbeY (154 aa).

His113, His117, and His123 together coordinate Zn(2+).

Belongs to the endoribonuclease YbeY family. Zn(2+) is required as a cofactor.

The protein localises to the cytoplasm. Functionally, single strand-specific metallo-endoribonuclease involved in late-stage 70S ribosome quality control and in maturation of the 3' terminus of the 16S rRNA. This Ehrlichia canis (strain Jake) protein is Endoribonuclease YbeY.